Consider the following 350-residue polypeptide: Biotin synthase (350 aa).

Residues 41–268 form the Radical SAM core domain; it reads NEVQISRLLS…KSRVRLSAGR (228 aa). Cys56, Cys60, and Cys63 together coordinate [4Fe-4S] cluster. Residues Cys100, Cys131, Cys191, and Arg263 each coordinate [2Fe-2S] cluster.

Belongs to the radical SAM superfamily. Biotin synthase family. Homodimer. [4Fe-4S] cluster is required as a cofactor. The cofactor is [2Fe-2S] cluster.

It carries out the reaction (4R,5S)-dethiobiotin + (sulfur carrier)-SH + 2 reduced [2Fe-2S]-[ferredoxin] + 2 S-adenosyl-L-methionine = (sulfur carrier)-H + biotin + 2 5'-deoxyadenosine + 2 L-methionine + 2 oxidized [2Fe-2S]-[ferredoxin]. The protein operates within cofactor biosynthesis; biotin biosynthesis; biotin from 7,8-diaminononanoate: step 2/2. Its function is as follows. Catalyzes the conversion of dethiobiotin (DTB) to biotin by the insertion of a sulfur atom into dethiobiotin via a radical-based mechanism. In Shewanella frigidimarina (strain NCIMB 400), this protein is Biotin synthase.